The following is a 952-amino-acid chain: Alpha-L-rhamnosidase (952 aa).

Positions 1–21 (MKYNKLLFSLLLLAVFCFSCK) are cleaved as a signal peptide. Residues Asp-520, 524-525 (RE), Asp-532, and Trp-594 each bind alpha-L-rhamnose. The Proton donor role is filled by Glu-525. The Proton acceptor role is filled by Glu-809. His-826 serves as a coordination point for alpha-L-rhamnose.

It belongs to the glycosyl hydrolase 78 family.

It is found in the cell membrane. The catalysed reaction is Hydrolysis of terminal non-reducing alpha-L-rhamnose residues in alpha-L-rhamnosides.. Alpha-L-rhamnosidase that may be involved in ulvan degradation. Ulvan is the main polysaccharide component of the Ulvales (green seaweed) cell wall. It is composed of disaccharide building blocks comprising 3-sulfated rhamnose (Rha3S) linked to D-glucuronic acid (GlcA), L-iduronic acid (IduA), or D-xylose (Xyl). The chain is Alpha-L-rhamnosidase from Formosa agariphila (strain DSM 15362 / KCTC 12365 / LMG 23005 / KMM 3901 / M-2Alg 35-1).